Reading from the N-terminus, the 289-residue chain is Phycobilisome 39 kDa linker polypeptide, phycocyanin-associated, rod (289 aa).

A PBS-linker domain is found at 2–180; sequence PITSAASRLG…LYRGYANSDR (179 aa). A disordered region spans residues 213 to 233; the sequence is SYLPSKQGTAPSRTFGRSSQG. The segment covering 216–233 has biased composition (polar residues); sequence PSKQGTAPSRTFGRSSQG. Residues 236–288 enclose the CpcD-like domain; sequence PRLYRIEVTGISLPRYPKVRRSNKEFIVPYEQLSSTLQQINKLGGKVASITFA.

This sequence belongs to the phycobilisome linker protein family.

Its subcellular location is the cellular thylakoid membrane. Functionally, rod linker protein, associated with phycocyanin. Linker polypeptides determine the state of aggregation and the location of the disk-shaped phycobiliprotein units within the phycobilisome and modulate their spectroscopic properties in order to mediate a directed and optimal energy transfer. This is Phycobilisome 39 kDa linker polypeptide, phycocyanin-associated, rod (cpcI2) from Microchaete diplosiphon (Fremyella diplosiphon).